A 452-amino-acid chain; its full sequence is Chaperone SurA (452 aa).

The first 28 residues, 1–28 (MKKTLRFAAVVSSLAAASALLAAAPAAA), serve as a signal peptide directing secretion. 2 PpiC domains span residues 186-288 (QQDL…RLVD) and 302-400 (IVQT…QVLS).

Its subcellular location is the periplasm. It carries out the reaction [protein]-peptidylproline (omega=180) = [protein]-peptidylproline (omega=0). Its function is as follows. Chaperone involved in the correct folding and assembly of outer membrane proteins. Recognizes specific patterns of aromatic residues and the orientation of their side chains, which are found more frequently in integral outer membrane proteins. May act in both early periplasmic and late outer membrane-associated steps of protein maturation. In Burkholderia lata (strain ATCC 17760 / DSM 23089 / LMG 22485 / NCIMB 9086 / R18194 / 383), this protein is Chaperone SurA.